Here is a 392-residue protein sequence, read N- to C-terminus: MRALLFDPYCGASGDMILGALIDLGADLEYVRSAVESVGCRLEVNERRFDHIRAIRVKVISDKSFRSLGGAIDILKASALTSRALERALRILDIMASAESKVHGVDRENARFHEMGSLDALADIAGSCAAMESLDVKRILSIAPSVGGGITDTSHGMLPVPAPATLEILRSHRIPWRGGPVAHELLTPTGAAILAASVDTFLDHHPEIVTERVGYGAGSREIGMPNLLRAILGEIPHHMQHDRVVQIETNVDDVTGEILGSLIDMLMKEGALDVTVVPAVMKKGRSGSVISIISRENDARKLSAVLMRETGSLGVRVFPALHRLIAERRIESVEVMGRSVPVKIGSIGGEIISVKPEHDVCRRIAEELNIPVKDIIRIASEKGWRIAGRKID.

The protein belongs to the LarC family.

The protein is Putative nickel insertion protein of Methanothrix thermoacetophila (strain DSM 6194 / JCM 14653 / NBRC 101360 / PT) (Methanosaeta thermophila).